We begin with the raw amino-acid sequence, 64 residues long: Conotoxin Vc1.3 (64 aa).

The N-terminal stretch at 1 to 21 (MGMRMMFTVFLLVVLATTVVS) is a signal peptide. Residues 22–43 (FTSDRASDGRKAAASDLITLTI) constitute a propeptide that is removed on maturation. Disulfide bonds link C46–C52 and C47–C60. At C60 the chain carries Cysteine amide.

The protein belongs to the conotoxin A superfamily. In terms of tissue distribution, expressed by the venom duct.

Its subcellular location is the secreted. In terms of biological role, may act as a toxin. In Conus victoriae (Queen Victoria cone), this protein is Conotoxin Vc1.3.